Reading from the N-terminus, the 328-residue chain is Ketol-acid reductoisomerase (NADP(+)) (328 aa).

The KARI N-terminal Rossmann domain occupies 1 to 179 (MRVLYERDGD…GGGAAGIIET (179 aa)). NADP(+)-binding positions include 24 to 27 (YGSQ), R47, and S51. Residue H106 is part of the active site. G132 provides a ligand contact to NADP(+). The KARI C-terminal knotted domain occupies 180 to 325 (TFVDETETDL…ARLRSRMTCA (146 aa)). Mg(2+) is bound by residues D188, E192, E224, and E228. Substrate is bound at residue S249.

The protein belongs to the ketol-acid reductoisomerase family. Mg(2+) is required as a cofactor.

It catalyses the reaction (2R)-2,3-dihydroxy-3-methylbutanoate + NADP(+) = (2S)-2-acetolactate + NADPH + H(+). It carries out the reaction (2R,3R)-2,3-dihydroxy-3-methylpentanoate + NADP(+) = (S)-2-ethyl-2-hydroxy-3-oxobutanoate + NADPH + H(+). The protein operates within amino-acid biosynthesis; L-isoleucine biosynthesis; L-isoleucine from 2-oxobutanoate: step 2/4. Its pathway is amino-acid biosynthesis; L-valine biosynthesis; L-valine from pyruvate: step 2/4. In terms of biological role, involved in the biosynthesis of branched-chain amino acids (BCAA). Catalyzes an alkyl-migration followed by a ketol-acid reduction of (S)-2-acetolactate (S2AL) to yield (R)-2,3-dihydroxy-isovalerate. In the isomerase reaction, S2AL is rearranged via a Mg-dependent methyl migration to produce 3-hydroxy-3-methyl-2-ketobutyrate (HMKB). In the reductase reaction, this 2-ketoacid undergoes a metal-dependent reduction by NADPH to yield (R)-2,3-dihydroxy-isovalerate. This Tremblaya princeps protein is Ketol-acid reductoisomerase (NADP(+)).